A 142-amino-acid chain; its full sequence is Profilin (142 aa).

This sequence belongs to the profilin family. In terms of assembly, occurs in many kinds of cells as a complex with monomeric actin in a 1:1 ratio. In terms of tissue distribution, expressed specifically in coelomocytes in response to injury.

The protein resides in the cytoplasm. It localises to the cytoskeleton. Functionally, binds to actin and affects the structure of the cytoskeleton. At high concentrations, profilin prevents the polymerization of actin, whereas it enhances it at low concentrations. By binding to PIP2, it inhibits the formation of IP3 and DG. The protein is Profilin of Strongylocentrotus purpuratus (Purple sea urchin).